The chain runs to 252 residues: Flagellar L-ring protein (252 aa).

The first 25 residues, 1 to 25 (MLKLASLNRIVLTGTLLAAAGLASG), serve as a signal peptide directing secretion. The N-palmitoyl cysteine moiety is linked to residue cysteine 26. The S-diacylglycerol cysteine moiety is linked to residue cysteine 26.

The protein belongs to the FlgH family. In terms of assembly, the basal body constitutes a major portion of the flagellar organelle and consists of four rings (L,P,S, and M) mounted on a central rod.

Its subcellular location is the cell outer membrane. It localises to the bacterial flagellum basal body. Functionally, assembles around the rod to form the L-ring and probably protects the motor/basal body from shearing forces during rotation. In Nitrobacter winogradskyi (strain ATCC 25391 / DSM 10237 / CIP 104748 / NCIMB 11846 / Nb-255), this protein is Flagellar L-ring protein.